We begin with the raw amino-acid sequence, 537 residues long: Berberine bridge enzyme-like 26 (537 aa).

A signal peptide spans 1-27 (MGISKPLPLFSILVLYFSLYTITPTSS). An intrachain disulfide couples Cys38 to Cys102. Asn59 carries N-linked (GlcNAc...) asparagine glycosylation. Residues 80 to 256 (SMPKPGFIFS…LAWKIKLVPV (177 aa)) enclose the FAD-binding PCMH-type domain. Positions 117-181 (HDYEGLSYVS…KVHGFPAGLC (65 aa)) form a cross-link, 6-(S-cysteinyl)-8alpha-(pros-histidyl)-FAD (His-Cys). An N-linked (GlcNAc...) asparagine glycan is attached at Asn306.

It belongs to the oxygen-dependent FAD-linked oxidoreductase family. It depends on FAD as a cofactor. Post-translationally, the FAD cofactor is bound via a bicovalent 6-S-cysteinyl, 8alpha-N1-histidyl FAD linkage.

It is found in the secreted. Its subcellular location is the cell wall. The protein is Berberine bridge enzyme-like 26 of Arabidopsis thaliana (Mouse-ear cress).